Consider the following 233-residue polypeptide: Glyceraldehyde-3-phosphate dehydrogenase A, chloroplastic (233 aa).

D-glyceraldehyde 3-phosphate-binding positions include 49 to 51 (SCT), threonine 80, arginine 95, 108 to 109 (TG), and arginine 131. The active-site Nucleophile is the cysteine 50. Asparagine 213 lines the NADP(+) pocket.

This sequence belongs to the glyceraldehyde-3-phosphate dehydrogenase family. As to quaternary structure, tetramer of either four A chains (GAPDH 2) or two A and two B chains (GAPDH 1).

The protein localises to the plastid. It is found in the chloroplast. It catalyses the reaction D-glyceraldehyde 3-phosphate + phosphate + NADP(+) = (2R)-3-phospho-glyceroyl phosphate + NADPH + H(+). The protein operates within carbohydrate biosynthesis; Calvin cycle. This is Glyceraldehyde-3-phosphate dehydrogenase A, chloroplastic (GAPA) from Sinapis alba (White mustard).